The following is a 711-amino-acid chain: Polyribonucleotide nucleotidyltransferase (711 aa).

2 residues coordinate Mg(2+): aspartate 486 and aspartate 492. One can recognise a KH domain in the interval 553–612; that stretch reads PRIHTIKISPDKIKDVIGKGGSVIRALTEETGTTIEIEDDGTVKIAATDGEKAKFAIRRI. The S1 motif domain maps to 622–690; that stretch reads GRIYNGKVTR…RQGRVRLSIK (69 aa). Residues 690–711 are disordered; that stretch reads KEATEQTQPAAAPEAPAAEQGE. The span at 694-711 shows a compositional bias: low complexity; it reads EQTQPAAAPEAPAAEQGE.

This sequence belongs to the polyribonucleotide nucleotidyltransferase family. As to quaternary structure, component of the RNA degradosome, which is a multiprotein complex involved in RNA processing and mRNA degradation. Mg(2+) serves as cofactor.

It is found in the cytoplasm. The catalysed reaction is RNA(n+1) + phosphate = RNA(n) + a ribonucleoside 5'-diphosphate. Involved in mRNA degradation. Catalyzes the phosphorolysis of single-stranded polyribonucleotides processively in the 3'- to 5'-direction. The polypeptide is Polyribonucleotide nucleotidyltransferase (Enterobacter sp. (strain 638)).